Reading from the N-terminus, the 300-residue chain is uncharacterized protein (300 aa).

Catalysis depends on histidine 274, which acts as the Proton acceptor.

It belongs to the AB hydrolase superfamily. Monomer.

The catalysed reaction is a carboxylic ester + H2O = an alcohol + a carboxylate + H(+). This is an uncharacterized protein from Bacillus subtilis (strain 168).